Consider the following 423-residue polypeptide: Polyglutamylase complex subunit TTLL1 (423 aa).

The 367-residue stretch at 1 to 367 (MAGKVKWVTD…NGEIPDCKWN (367 aa)) folds into the TTL domain. Residues Lys-138, 144–145 (QG), 181–184 (SLYI), and 194–196 (KFD) each bind ATP. Gln-144 is a binding site for a protein. Arg-220 provides a ligand contact to L-glutamate. 241–242 (TN) lines the ATP pocket. Residue Lys-259 coordinates L-glutamate. Asp-313, Glu-326, and Asn-328 together coordinate Mg(2+). Lys-344 is a binding site for L-glutamate. A disordered region spans residues 391–423 (GADRELRSRQGQSLGPRAGRSRDSGRAVLTTWK).

This sequence belongs to the tubulin polyglutamylase family. Part of the neuronal tubulin polyglutamylase complex which contains TPGS1, TPGS2, TTLL1, LRRC49 and NICN1. Interacts with PCM1, CSTPP1 and LRRC49. Requires Mg(2+) as cofactor. In terms of tissue distribution, expressed in a wide range of tissues. Has a stronger expression in heart, brain and testis.

It is found in the cytoplasm. The protein resides in the cytoskeleton. The protein localises to the cilium basal body. Its subcellular location is the cilium axoneme. It localises to the cell projection. It is found in the cilium. The protein resides in the flagellum. The enzyme catalyses (L-glutamyl)(n)-gamma-L-glutamyl-L-glutamyl-[protein] + L-glutamate + ATP = (L-glutamyl)(n+1)-gamma-L-glutamyl-L-glutamyl-[protein] + ADP + phosphate + H(+). In terms of biological role, catalytic subunit of a polyglutamylase complex which modifies tubulin, generating side chains of glutamate on the gamma-carboxyl group of specific glutamate residues within the C-terminal tail of tubulin. Probably involved in the side-chain elongation step of the polyglutamylation reaction rather than the initiation step. Modifies both alpha- and beta-tubulins with a preference for the alpha-tail. Unlike most polyglutamylases of the tubulin--tyrosine ligase family, only displays a catalytic activity when in complex with other proteins as it is most likely lacking domains important for autonomous activity. Part of the neuronal tubulin polyglutamylase complex. Mediates cilia and flagella polyglutamylation which is essential for their biogenesis and motility. Involved in respiratory motile cilia function through the regulation of beating asymmetry. Essential for sperm flagella biogenesis, motility and male fertility. Involved in KLF4 glutamylation which impedes its ubiquitination, thereby leading to somatic cell reprogramming, pluripotency maintenance and embryogenesis. The chain is Polyglutamylase complex subunit TTLL1 from Homo sapiens (Human).